The sequence spans 694 residues: MATPLKLYRNIGIAAHVDAGKTTTTERVLYYTGMSHKIGEVHDGAATMDWMVQEQERGITITSAATTCYWSGMDKQFESHRINIIDTPGHVDFMIEVERSLRVLDGAVVVFDSVAGVEPQSETVWRQANKYGVPRIVFVNKMDRMGANFLRVVSQIKQRLGSTPVVLQLPIGAEEEFKGVIDLIKMKAIHWDEENKGMTFKYVDIPADLKSTCEEYRAHIIEAAAEYSEELMEKYLEGEEFTEAEIKKALRHLTITNKVVPVFCGSAFKNKGVQAVLDGVIEYLPSPTDIPDIQGVDEHGDVIHRKTSYDEPFSALAFKIATDPFVGTLTYFRAYSGILKSGDTVYNSVKGKKERIGRLLQMHANSREEIKEVRAGDIAAAVGLKTVTTGDTLCDQDKVVILERMDFPDPVIAVAVEPKTKADQEKMGIALGKLAQEDPSFRVHTDEESGQTIIQGMGELHLEIIVDRMKREFNVEANVGKPQVAYRETLKQAVEQEGKFVRQSGGRGQYGHVWLKIEPQEPGKGYEFINAIVGGVIPKEYIPAVDKGIQEQMQNGVIAGYPVVDVKVTLFDGSFHEVDSSEMAFKIAGSQCFKQGALKAKPVLLEPIMSVEVVTPEDYMGDVMGDLNRRRGLVQGMEDSPAGKIVRAEVPLAEMFGYSTDLRSATQGRATYTMEFCKYAEAPTNIAEAIIKKQ.

In terms of domain architecture, tr-type G spans 6–288; that stretch reads KLYRNIGIAA…GVIEYLPSPT (283 aa). GTP-binding positions include 15-22, 86-90, and 140-143; these read AHVDAGKT, DTPGH, and NKMD.

The protein belongs to the TRAFAC class translation factor GTPase superfamily. Classic translation factor GTPase family. EF-G/EF-2 subfamily.

It is found in the cytoplasm. Functionally, catalyzes the GTP-dependent ribosomal translocation step during translation elongation. During this step, the ribosome changes from the pre-translocational (PRE) to the post-translocational (POST) state as the newly formed A-site-bound peptidyl-tRNA and P-site-bound deacylated tRNA move to the P and E sites, respectively. Catalyzes the coordinated movement of the two tRNA molecules, the mRNA and conformational changes in the ribosome. The protein is Elongation factor G of Legionella pneumophila subsp. pneumophila (strain Philadelphia 1 / ATCC 33152 / DSM 7513).